Consider the following 189-residue polypeptide: uncharacterized protein (189 aa).

The next 4 helical transmembrane spans lie at Ile-35–Lys-55, Gly-97–Phe-117, Trp-123–Thr-143, and Gly-144–Ile-164.

The protein localises to the cell membrane. This is an uncharacterized protein from Bacillus subtilis (strain 168).